The following is a 443-amino-acid chain: Glutamate-1-semialdehyde 2,1-aminomutase (443 aa).

At Lys277 the chain carries N6-(pyridoxal phosphate)lysine.

Belongs to the class-III pyridoxal-phosphate-dependent aminotransferase family. HemL subfamily. In terms of assembly, homodimer. Requires pyridoxal 5'-phosphate as cofactor.

It is found in the cytoplasm. The enzyme catalyses (S)-4-amino-5-oxopentanoate = 5-aminolevulinate. Its pathway is porphyrin-containing compound metabolism; protoporphyrin-IX biosynthesis; 5-aminolevulinate from L-glutamyl-tRNA(Glu): step 2/2. The chain is Glutamate-1-semialdehyde 2,1-aminomutase from Pseudarthrobacter chlorophenolicus (strain ATCC 700700 / DSM 12829 / CIP 107037 / JCM 12360 / KCTC 9906 / NCIMB 13794 / A6) (Arthrobacter chlorophenolicus).